The sequence spans 332 residues: o-succinylbenzoate synthase (332 aa).

Lys-135 serves as the catalytic Proton donor. Positions 163, 192, and 215 each coordinate Mg(2+). Lys-241 functions as the Proton acceptor in the catalytic mechanism.

Belongs to the mandelate racemase/muconate lactonizing enzyme family. MenC type 1 subfamily. A divalent metal cation is required as a cofactor.

The catalysed reaction is (1R,6R)-6-hydroxy-2-succinyl-cyclohexa-2,4-diene-1-carboxylate = 2-succinylbenzoate + H2O. Its pathway is quinol/quinone metabolism; 1,4-dihydroxy-2-naphthoate biosynthesis; 1,4-dihydroxy-2-naphthoate from chorismate: step 4/7. It functions in the pathway quinol/quinone metabolism; menaquinone biosynthesis. Converts 2-succinyl-6-hydroxy-2,4-cyclohexadiene-1-carboxylate (SHCHC) to 2-succinylbenzoate (OSB). This chain is o-succinylbenzoate synthase, found in Vibrio cholerae serotype O1 (strain ATCC 39315 / El Tor Inaba N16961).